The primary structure comprises 136 residues: Small ribosomal subunit protein uS12 (136 aa).

Asp-89 carries the post-translational modification 3-methylthioaspartic acid. The segment at 101–136 is disordered; sequence SLDTSGVADRKQSRSKYGAKQPKAGVPAPVKGKGKR.

It belongs to the universal ribosomal protein uS12 family. As to quaternary structure, part of the 30S ribosomal subunit. Contacts proteins S8 and S17. May interact with IF1 in the 30S initiation complex.

With S4 and S5 plays an important role in translational accuracy. Its function is as follows. Interacts with and stabilizes bases of the 16S rRNA that are involved in tRNA selection in the A site and with the mRNA backbone. Located at the interface of the 30S and 50S subunits, it traverses the body of the 30S subunit contacting proteins on the other side and probably holding the rRNA structure together. The combined cluster of proteins S8, S12 and S17 appears to hold together the shoulder and platform of the 30S subunit. This Pelodictyon phaeoclathratiforme (strain DSM 5477 / BU-1) protein is Small ribosomal subunit protein uS12.